A 254-amino-acid chain; its full sequence is Ribonuclease HII (254 aa).

Residues Lys46 to Val234 enclose the RNase H type-2 domain. Asp52, Glu53, and Asp144 together coordinate a divalent metal cation.

It belongs to the RNase HII family. Mn(2+) serves as cofactor. The cofactor is Mg(2+).

The protein resides in the cytoplasm. The catalysed reaction is Endonucleolytic cleavage to 5'-phosphomonoester.. Its function is as follows. Endonuclease that specifically degrades the RNA of RNA-DNA hybrids. This chain is Ribonuclease HII, found in Koribacter versatilis (strain Ellin345).